Here is a 316-residue protein sequence, read N- to C-terminus: Glutathione synthetase (316 aa).

Positions 125 to 310 constitute an ATP-grasp domain; that stretch reads KLFTAWFSDL…ITGMLMDAIE (186 aa). An ATP-binding site is contributed by 151–207; sequence WEKHSDIILKPLDGMGGASIFRVKEGDPNLGVIAETLTEHGTCYCMAQNYLPAIKDG. Mg(2+) is bound by residues glutamate 281 and asparagine 283.

It belongs to the prokaryotic GSH synthase family. It depends on Mg(2+) as a cofactor. The cofactor is Mn(2+).

It catalyses the reaction gamma-L-glutamyl-L-cysteine + glycine + ATP = glutathione + ADP + phosphate + H(+). Its pathway is sulfur metabolism; glutathione biosynthesis; glutathione from L-cysteine and L-glutamate: step 2/2. In Shigella flexneri, this protein is Glutathione synthetase.